Consider the following 438-residue polypeptide: Alpha-methylserine aldolase (438 aa).

N6-(pyridoxal phosphate)lysine is present on Lys-252.

This sequence belongs to the SHMT family. Alpha-methylserine aldolase subfamily. As to quaternary structure, homodimer. Requires pyridoxal 5'-phosphate as cofactor.

It carries out the reaction 2-methyl-L-serine = formaldehyde + L-alanine. With respect to regulation, in the alpha-methyl-L-serine synthesis reaction, activity is inhibited by an excess amount of formaldehyde (at a concentration greater than 10 mM). In terms of biological role, catalyzes the reversible interconversion of alpha-methyl-L-serine to L-alanine and formaldehyde. Cannot use alpha-methyl-D-serine, L-serine or D-serine. Cannot use D-alanine instead of L-alanine as the substrate for alpha-methyl-L-serine synthesis. Does not require tetrahydrofolate (THF) for activity. In Ralstonia sp, this protein is Alpha-methylserine aldolase.